Here is a 182-residue protein sequence, read N- to C-terminus: Pyruvoyl-dependent arginine decarboxylase (182 aa).

A Pyruvic acid (Ser) modification is found at Ser44.

Belongs to the PdaD family. Pyruvate is required as a cofactor.

The catalysed reaction is L-arginine + H(+) = agmatine + CO2. This is Pyruvoyl-dependent arginine decarboxylase from Picrophilus torridus (strain ATCC 700027 / DSM 9790 / JCM 10055 / NBRC 100828 / KAW 2/3).